The primary structure comprises 88 residues: Long neurotoxin LNTX-1 (88 aa).

The N-terminal stretch at 1–21 is a signal peptide; it reads MKTLLLTLVVVTIVCLDFGYA. 5 disulfides stabilise this stretch: Cys-24–Cys-42, Cys-35–Cys-63, Cys-48–Cys-52, Cys-67–Cys-78, and Cys-79–Cys-84.

This sequence belongs to the three-finger toxin family. Long-chain subfamily. Type II alpha-neurotoxin sub-subfamily. In terms of tissue distribution, expressed by the venom gland.

It localises to the secreted. Binds with high affinity to muscular (alpha-1/CHRNA1) and neuronal (alpha-7/CHRNA7) nicotinic acetylcholine receptor (nAChR) and inhibits acetylcholine from binding to the receptor, thereby impairing neuromuscular and neuronal transmission. This Demansia vestigiata (Lesser black whip snake) protein is Long neurotoxin LNTX-1.